A 262-amino-acid chain; its full sequence is 14-3-3-like protein A (262 aa).

Positions 240 to 262 (DNAEEGGDEIKEAASKPEGEGHS) are disordered. Over residues 247–262 (DEIKEAASKPEGEGHS) the composition is skewed to basic and acidic residues.

This sequence belongs to the 14-3-3 family.

The chain is 14-3-3-like protein A from Hordeum vulgare (Barley).